Consider the following 255-residue polypeptide: Indole-3-glycerol phosphate synthase (255 aa).

It belongs to the TrpC family.

The catalysed reaction is 1-(2-carboxyphenylamino)-1-deoxy-D-ribulose 5-phosphate + H(+) = (1S,2R)-1-C-(indol-3-yl)glycerol 3-phosphate + CO2 + H2O. Its pathway is amino-acid biosynthesis; L-tryptophan biosynthesis; L-tryptophan from chorismate: step 4/5. This is Indole-3-glycerol phosphate synthase from Streptococcus pneumoniae serotype 2 (strain D39 / NCTC 7466).